Consider the following 549-residue polypeptide: mRNA-capping enzyme subunit beta (549 aa).

Serine 2 is subject to N-acetylserine. A Phosphoserine modification is found at serine 15. A disordered region spans residues 30–169 (LQKLSEAANG…QGNEGNIASN (140 aa)). Positions 86 to 96 (DDEETDTDDEM) are enriched in acidic residues. Serine 124 is subject to Phosphoserine. The span at 135 to 157 (AKLEKPSDDSIHQNSKSDEEQRI) shows a compositional bias: basic and acidic residues. The active-site N6-GMP-lysine intermediate is lysine 223.

It belongs to the fungal TPase family. In terms of assembly, heterodimer. The mRNA-capping enzyme is composed of two separate chains alpha and beta, respectively a mRNA guanylyltransferase and an mRNA 5'-triphosphate monophosphatase. Requires Mg(2+) as cofactor.

Its subcellular location is the nucleus. It catalyses the reaction a 5'-end triphospho-ribonucleoside in mRNA + H2O = a 5'-end diphospho-ribonucleoside in mRNA + phosphate + H(+). First step of mRNA capping. Converts the 5'-triphosphate end of a nascent mRNA chain into a diphosphate end. This chain is mRNA-capping enzyme subunit beta (CET1), found in Saccharomyces cerevisiae (strain ATCC 204508 / S288c) (Baker's yeast).